The sequence spans 326 residues: Beta-ketoacyl-[acyl-carrier-protein] synthase III (326 aa).

Residues Cys-115 and His-253 contribute to the active site. Residues 254-258 (QANKR) are ACP-binding. Asn-283 is an active-site residue.

The protein belongs to the thiolase-like superfamily. FabH family. In terms of assembly, homodimer.

Its subcellular location is the cytoplasm. The enzyme catalyses malonyl-[ACP] + acetyl-CoA + H(+) = 3-oxobutanoyl-[ACP] + CO2 + CoA. Its pathway is lipid metabolism; fatty acid biosynthesis. Its function is as follows. Catalyzes the condensation reaction of fatty acid synthesis by the addition to an acyl acceptor of two carbons from malonyl-ACP. Catalyzes the first condensation reaction which initiates fatty acid synthesis and may therefore play a role in governing the total rate of fatty acid production. Possesses both acetoacetyl-ACP synthase and acetyl transacylase activities. Its substrate specificity determines the biosynthesis of branched-chain and/or straight-chain of fatty acids. This is Beta-ketoacyl-[acyl-carrier-protein] synthase III from Bradyrhizobium diazoefficiens (strain JCM 10833 / BCRC 13528 / IAM 13628 / NBRC 14792 / USDA 110).